Here is a 251-residue protein sequence, read N- to C-terminus: Pyrroloquinoline-quinone synthase (251 aa).

Belongs to the PqqC family.

It carries out the reaction 6-(2-amino-2-carboxyethyl)-7,8-dioxo-1,2,3,4,7,8-hexahydroquinoline-2,4-dicarboxylate + 3 O2 = pyrroloquinoline quinone + 2 H2O2 + 2 H2O + H(+). Its pathway is cofactor biosynthesis; pyrroloquinoline quinone biosynthesis. Functionally, ring cyclization and eight-electron oxidation of 3a-(2-amino-2-carboxyethyl)-4,5-dioxo-4,5,6,7,8,9-hexahydroquinoline-7,9-dicarboxylic-acid to PQQ. The protein is Pyrroloquinoline-quinone synthase of Pseudomonas putida (strain ATCC 47054 / DSM 6125 / CFBP 8728 / NCIMB 11950 / KT2440).